The chain runs to 141 residues: U-scoloptoxin(17)-Er3a (141 aa).

An N-terminal signal peptide occupies residues 1 to 21 (MKSTFALVFGILMVIAHLSFA).

This sequence belongs to the scoloptoxin-17 family. In terms of processing, contains 3 disulfide bonds. As to expression, expressed by the venom gland.

Its subcellular location is the secreted. The polypeptide is U-scoloptoxin(17)-Er3a (Ethmostigmus rubripes (Giant centipede)).